The sequence spans 59 residues: Flagellar basal-body rod protein FlgC (59 aa).

It belongs to the flagella basal body rod proteins family. The basal body constitutes a major portion of the flagellar organelle and consists of four rings (L,P,S, and M) mounted on a central rod. The rod consists of about 26 subunits of FlgG in the distal portion, and FlgB, FlgC and FlgF are thought to build up the proximal portion of the rod with about 6 subunits each.

The protein localises to the bacterial flagellum basal body. This Borrelia hermsii protein is Flagellar basal-body rod protein FlgC (flgC).